A 260-amino-acid chain; its full sequence is Tropinone reductase 2 (260 aa).

18-41 provides a ligand contact to NADP(+); the sequence is SRGIGYGIVEELASLGASVYTCSR. S146 serves as a coordination point for substrate. Y159 (proton acceptor) is an active-site residue. 192-196 serves as a coordination point for NADP(+); the sequence is IATSL.

This sequence belongs to the short-chain dehydrogenases/reductases (SDR) family. In terms of assembly, homodimer.

It carries out the reaction pseudotropine + NADP(+) = tropinone + NADPH + H(+). It participates in alkaloid biosynthesis; tropane alkaloid biosynthesis. Functionally, catalyzes the stereospecific reduction of tropinone to pseudotropine. The chain is Tropinone reductase 2 (TR2) from Datura stramonium (Jimsonweed).